A 141-amino-acid chain; its full sequence is Nucleoside triphosphatase NudI (141 aa).

Residues 1–141 form the Nudix hydrolase domain; sequence MRQRTIVCPL…RHTLRLKGLL (141 aa). Residues 38–59 carry the Nudix box motif; sequence GGVEPGERIEEALRREIREELG.

The protein belongs to the Nudix hydrolase family. NudI subfamily. As to quaternary structure, monomer. Mg(2+) serves as cofactor.

The enzyme catalyses a ribonucleoside 5'-triphosphate + H2O = a ribonucleoside 5'-phosphate + diphosphate + H(+). The catalysed reaction is a 2'-deoxyribonucleoside 5'-triphosphate + H2O = a 2'-deoxyribonucleoside 5'-phosphate + diphosphate + H(+). It catalyses the reaction dUTP + H2O = dUMP + diphosphate + H(+). It carries out the reaction dTTP + H2O = dTMP + diphosphate + H(+). The enzyme catalyses dCTP + H2O = dCMP + diphosphate + H(+). Catalyzes the hydrolysis of nucleoside triphosphates, with a preference for pyrimidine deoxynucleoside triphosphates (dUTP, dTTP and dCTP). This is Nucleoside triphosphatase NudI from Salmonella arizonae (strain ATCC BAA-731 / CDC346-86 / RSK2980).